The sequence spans 233 residues: Homeobox protein not2 (233 aa).

A DNA-binding region (homeobox) is located at residues 135–194; it reads LKRIRTVFTPEQLERLEKEFLKQQYMVGTERVDLASTLNLTETQVKVWFQNRRIKWRKQS. A disordered region spans residues 212 to 233; that stretch reads SSDHTDDSRETEEEEDDVDVEL. A compositionally biased stretch (acidic residues) spans 220–233; it reads RETEEEEDDVDVEL.

In terms of tissue distribution, localized to the dorsal lip of the blastopore (Spemann organizer) during early gastrulation, after which expression continues in tissues derived from the organizer. Expressed in the notochord during mid-gastrulation, the chordoneural hinge, notochord and ventral spinal cord of the tailbud at stage 22, and finally the tip of the tail in the tadpole (stage 35).

It is found in the nucleus. In terms of biological role, transcriptional repressor. Plays a fundamental role in notochord formation, acting within the mesodermal region. Acts downstream of gsc and upstream of chrd and foxa4-A/pintallavis. The protein is Homeobox protein not2 of Xenopus laevis (African clawed frog).